The sequence spans 277 residues: NH(3)-dependent NAD(+) synthetase (277 aa).

36–43 (GLSGGIDS) is a binding site for ATP. Asp42 provides a ligand contact to Mg(2+). Arg118 lines the deamido-NAD(+) pocket. Thr138 lines the ATP pocket. Glu143 serves as a coordination point for Mg(2+). Residues Lys167 and Ser189 each contribute to the ATP site.

This sequence belongs to the NAD synthetase family. As to quaternary structure, homodimer.

It carries out the reaction deamido-NAD(+) + NH4(+) + ATP = AMP + diphosphate + NAD(+) + H(+). It participates in cofactor biosynthesis; NAD(+) biosynthesis; NAD(+) from deamido-NAD(+) (ammonia route): step 1/1. In terms of biological role, catalyzes the ATP-dependent amidation of deamido-NAD to form NAD. Uses ammonia as a nitrogen source. The protein is NH(3)-dependent NAD(+) synthetase of Chlorobium phaeobacteroides (strain DSM 266 / SMG 266 / 2430).